Consider the following 610-residue polypeptide: Putative protein tag-250 (610 aa).

Tudor domains follow at residues 149–260 (VALK…LLPP) and 386–506 (MPMS…KIGG).

The sequence is that of Putative protein tag-250 (tag-250) from Caenorhabditis elegans.